We begin with the raw amino-acid sequence, 231 residues long: ATP-dependent dethiobiotin synthetase BioD 2 (231 aa).

13–18 is an ATP binding site; the sequence is SVGKTV. Position 17 (Thr17) interacts with Mg(2+). The active site involves Lys38. Residues Asp55, 112 to 115, 172 to 173, 201 to 203, and Gln208 contribute to the ATP site; these read EGTG, NR, and PYL. Residues Asp55 and Glu112 each coordinate Mg(2+).

It belongs to the dethiobiotin synthetase family. In terms of assembly, homodimer. Requires Mg(2+) as cofactor.

Its subcellular location is the cytoplasm. It carries out the reaction (7R,8S)-7,8-diammoniononanoate + CO2 + ATP = (4R,5S)-dethiobiotin + ADP + phosphate + 3 H(+). It participates in cofactor biosynthesis; biotin biosynthesis; biotin from 7,8-diaminononanoate: step 1/2. Functionally, catalyzes a mechanistically unusual reaction, the ATP-dependent insertion of CO2 between the N7 and N8 nitrogen atoms of 7,8-diaminopelargonic acid (DAPA, also called 7,8-diammoniononanoate) to form a ureido ring. In Escherichia coli O157:H7, this protein is ATP-dependent dethiobiotin synthetase BioD 2.